The primary structure comprises 254 residues: MVIANSNIIFVAGLGGIGLDTSREIVKSGPKNLVVLDRIDNPAAIAELKALNPKVTITFYPYDVTVPLAETKKLLKTIFDKLKTVDLLINGAGILDDTQIERTIAVNFTGTVNTTTAIMDFWDKRKGGPGGVVANICSVTGFNSIYQVPVYSASKAAALSFTTSLAKLAHITGVTVYSINPGITKTVLVHKFNSWLNVEPRVAELLLEHPTQTTLQCAQNFVKAIEANQNGAIWKLDLGRLDAIEWTKHWDSGI.

Residue 10–33 (FVAGLGGIGLDTSREIVKSGPKNL) coordinates NAD(+). Substrate is bound at residue serine 138. Tyrosine 151 (proton acceptor) is an active-site residue.

This sequence belongs to the short-chain dehydrogenases/reductases (SDR) family. As to quaternary structure, homodimer.

It catalyses the reaction a primary alcohol + NAD(+) = an aldehyde + NADH + H(+). The enzyme catalyses a secondary alcohol + NAD(+) = a ketone + NADH + H(+). The protein is Alcohol dehydrogenase (Adh) of Drosophila heteroneura (Fruit fly).